We begin with the raw amino-acid sequence, 301 residues long: Type II restriction enzyme BslI subunit beta (301 aa).

A CHC2-type zinc finger spans residues Cys-62–Cys-82.

As to quaternary structure, heterotetramer of two alpha and two beta subunits. The alpha subunit is believed to be responsible for DNA recognition, while the beta subunit is thought to mediate cleavage. The cofactor is Zn(2+).

It carries out the reaction Endonucleolytic cleavage of DNA to give specific double-stranded fragments with terminal 5'-phosphates.. Its function is as follows. A P subtype restriction enzyme that recognizes the double-stranded sequence 5'-CCN(7)GG-3' and cleaves after N-7. In Bacillus sp. (strain NEB-606), this protein is Type II restriction enzyme BslI subunit beta.